The sequence spans 95 residues: Opiscorpine-2 (95 aa).

The first 19 residues, 1 to 19, serve as a signal peptide directing secretion; the sequence is MNNKLTALIFHGLLAIASC. The BetaSPN-type CS-alpha/beta domain maps to 55–95; the sequence is EFMCMANMDPTGSCETHCQKASGEKGYCHGTKCKCGVPLSY. Cystine bridges form between Cys-58–Cys-82, Cys-68–Cys-87, and Cys-72–Cys-89.

It belongs to the long chain scorpion toxin family. Class 3 subfamily. In terms of tissue distribution, expressed by the venom gland.

It localises to the secreted. Functionally, has antimicrobial activity against yeasts and bacteria. The chain is Opiscorpine-2 from Opistophthalmus carinatus (African yellow leg scorpion).